The chain runs to 343 residues: Mediator of RNA polymerase II transcription subunit 2 (343 aa).

Disordered regions lie at residues 105–141 (KQQQEEEQRRKHQAELEKNKRQQEHDAATKAAAAQQL) and 252–277 (STNEASTNNRNNDGTGGASNPRISSN). Basic and acidic residues predominate over residues 107–132 (QQEEEQRRKHQAELEKNKRQQEHDAA). Polar residues predominate over residues 252-264 (STNEASTNNRNND).

The protein belongs to the Mediator complex subunit 2 family. Component of the Mediator complex.

It is found in the nucleus. Its function is as follows. Component of the Mediator complex, a coactivator involved in the regulated transcription of nearly all RNA polymerase II-dependent genes. Mediator functions as a bridge to convey information from gene-specific regulatory proteins to the basal RNA polymerase II transcription machinery. Mediator is recruited to promoters by direct interactions with regulatory proteins and serves as a scaffold for the assembly of a functional preinitiation complex with RNA polymerase II and the general transcription factors. The sequence is that of Mediator of RNA polymerase II transcription subunit 2 (MED2) from Eremothecium gossypii (strain ATCC 10895 / CBS 109.51 / FGSC 9923 / NRRL Y-1056) (Yeast).